A 191-amino-acid chain; its full sequence is Ion-translocating oxidoreductase complex subunit B (191 aa).

The tract at residues 1 to 26 (MSAVLIAVLALLALCLLGGAILGFAA) is hydrophobic. The 59-residue stretch at 32–90 (EGDPIAEQINALLPQTQCGQCGYPGCKPYAEAIAGGDKINKCPPGGEATIQALADLLDV) folds into the 4Fe-4S domain. Positions 49, 52, 57, 73, 114, 117, 120, 124, 144, 147, 150, and 154 each coordinate [4Fe-4S] cluster. 4Fe-4S ferredoxin-type domains lie at 105-134 (MVAYIREAECIGCTKCIQACPVDAIVGAAR) and 135-164 (QMHTVIISECTGCDLCVEPCPVDCIDMIEV).

The protein belongs to the 4Fe4S bacterial-type ferredoxin family. RnfB subfamily. In terms of assembly, the complex is composed of six subunits: RnfA, RnfB, RnfC, RnfD, RnfE and RnfG. [4Fe-4S] cluster serves as cofactor.

It localises to the cell inner membrane. In terms of biological role, part of a membrane-bound complex that couples electron transfer with translocation of ions across the membrane. This chain is Ion-translocating oxidoreductase complex subunit B, found in Stutzerimonas stutzeri (strain A1501) (Pseudomonas stutzeri).